Here is a 555-residue protein sequence, read N- to C-terminus: Genome polyprotein (555 aa).

Topologically, residues 1–7 (KHAQRIE) are extracellular. A helical transmembrane segment spans residues 8–28 (TWILRHPGFTIMAAILAYTIG). Topologically, residues 29–34 (TTHFQR) are cytoplasmic. The helical transmembrane segment at 35-49 (ALIFILLTAVAPSMT) threads the bilayer. Residues 50–494 (MRCIGISNRD…LHQVFGAIYG (445 aa)) are Extracellular-facing. 4 disulfides stabilise this stretch: cysteine 52/cysteine 79, cysteine 109/cysteine 170, cysteine 123/cysteine 154, and cysteine 141/cysteine 165. Asparagine 116 carries N-linked (GlcNAc...) asparagine; by host glycosylation. A fusion peptide region spans residues 147–160 (DRGWGNGCGLFGKG). An N-linked (GlcNAc...) asparagine; by host glycan is attached at asparagine 202. 2 disulfide bridges follow: cysteine 234–cysteine 334 and cysteine 351–cysteine 382. The chain crosses the membrane as a helical span at residues 495-515 (AAFSGVSWTMKILIGVIITWI). Topologically, residues 516–521 (GMNSRS) are cytoplasmic. Residues 522 to 542 (TSLSVSLVLVGIVTLYLEVMV) traverse the membrane as a helical segment. At 543 to 555 (QADSGCVVSWKNK) the chain is on the extracellular side.

In terms of assembly, homodimer; in the endoplasmic reticulum and Golgi. Interacts with protein prM. Interacts with non-structural protein 1. Homodimer; Homohexamer when secreted. Interacts with envelope protein E. N-glycosylated. In terms of processing, N-glycosylated. The excreted form is glycosylated and this is required for efficient secretion of the protein from infected cells. Post-translationally, specific enzymatic cleavages in vivo yield mature proteins. Cleavages in the lumen of endoplasmic reticulum are performed by host signal peptidase, wereas cleavages in the cytoplasmic side are performed by serine protease NS3. Signal cleavage at the 2K-4B site requires a prior NS3 protease-mediated cleavage at the 4A-2K site.

It is found in the virion membrane. The protein resides in the host endoplasmic reticulum membrane. The protein localises to the secreted. In terms of biological role, may play a role in virus budding. Exerts cytotoxic effects by activating a mitochondrial apoptotic pathway through M ectodomain. May display a viroporin activity. Functionally, binds to host cell surface receptor and mediates fusion between viral and cellular membranes. Envelope protein is synthesized in the endoplasmic reticulum in the form of heterodimer with protein prM. They play a role in virion budding in the ER, and the newly formed immature particle is covered with 60 spikes composed of heterodimer between precursor prM and envelope protein E. The virion is transported to the Golgi apparatus where the low pH causes dissociation of PrM-E heterodimers and formation of E homodimers. prM-E cleavage is inefficient, and many virions are only partially matured. These uncleaved prM would play a role in immune evasion. Involved in immune evasion, pathogenesis and viral replication. Once cleaved off the polyprotein, is targeted to three destinations: the viral replication cycle, the plasma membrane and the extracellular compartment. Essential for viral replication. Required for formation of the replication complex and recruitment of other non-structural proteins to the ER-derived membrane structures. Excreted as a hexameric lipoparticle that plays a role against host immune response. Antagonizing the complement function. Binds to the host macrophages and dendritic cells. Inhibits signal transduction originating from Toll-like receptor 3 (TLR3). Its function is as follows. Disrupts the host endothelial glycocalyx layer of host pulmonary microvascular endothelial cells, inducing degradation of sialic acid and shedding of heparan sulfate proteoglycans. NS1 induces expression of sialidases, heparanase, and activates cathepsin L, which activates heparanase via enzymatic cleavage. These effects are probably linked to the endothelial hyperpermeability observed in severe dengue disease. The protein is Genome polyprotein of Dengue virus type 2 (strain Thailand/TH-36/1958) (DENV-2).